A 305-amino-acid polypeptide reads, in one-letter code: Sulfate adenylyltransferase subunit 2 (305 aa).

It belongs to the PAPS reductase family. CysD subfamily. In terms of assembly, heterodimer composed of CysD, the smaller subunit, and CysN.

The catalysed reaction is sulfate + ATP + H(+) = adenosine 5'-phosphosulfate + diphosphate. It functions in the pathway sulfur metabolism; hydrogen sulfide biosynthesis; sulfite from sulfate: step 1/3. With CysN forms the ATP sulfurylase (ATPS) that catalyzes the adenylation of sulfate producing adenosine 5'-phosphosulfate (APS) and diphosphate, the first enzymatic step in sulfur assimilation pathway. APS synthesis involves the formation of a high-energy phosphoric-sulfuric acid anhydride bond driven by GTP hydrolysis by CysN coupled to ATP hydrolysis by CysD. The polypeptide is Sulfate adenylyltransferase subunit 2 (Pseudomonas fluorescens (strain Pf0-1)).